A 261-amino-acid chain; its full sequence is Sulfur carrier protein FdhD (261 aa).

Cysteine 105 acts as the Cysteine persulfide intermediate in catalysis. 245-250 (FIRGDR) lines the Mo-bis(molybdopterin guanine dinucleotide) pocket.

Belongs to the FdhD family.

The protein resides in the cytoplasm. Required for formate dehydrogenase (FDH) activity. Acts as a sulfur carrier protein that transfers sulfur from IscS to the molybdenum cofactor prior to its insertion into FDH. This Listeria monocytogenes serotype 4b (strain F2365) protein is Sulfur carrier protein FdhD.